A 298-amino-acid polypeptide reads, in one-letter code: 4-hydroxy-tetrahydrodipicolinate synthase (298 aa).

Threonine 48 contacts pyruvate. Tyrosine 137 serves as the catalytic Proton donor/acceptor. The active-site Schiff-base intermediate with substrate is the lysine 166. Position 207 (isoleucine 207) interacts with pyruvate.

This sequence belongs to the DapA family. As to quaternary structure, homotetramer; dimer of dimers.

The protein resides in the cytoplasm. It catalyses the reaction L-aspartate 4-semialdehyde + pyruvate = (2S,4S)-4-hydroxy-2,3,4,5-tetrahydrodipicolinate + H2O + H(+). It participates in amino-acid biosynthesis; L-lysine biosynthesis via DAP pathway; (S)-tetrahydrodipicolinate from L-aspartate: step 3/4. Functionally, catalyzes the condensation of (S)-aspartate-beta-semialdehyde [(S)-ASA] and pyruvate to 4-hydroxy-tetrahydrodipicolinate (HTPA). This Campylobacter jejuni subsp. jejuni serotype O:6 (strain 81116 / NCTC 11828) protein is 4-hydroxy-tetrahydrodipicolinate synthase.